Here is a 555-residue protein sequence, read N- to C-terminus: High-affinity gluconate transporter ght3 (555 aa).

The Cytoplasmic portion of the chain corresponds to 1-9; it reads MNRFITSIL. A helical transmembrane segment spans residues 10 to 30; sequence VVFISMSGWLQGADTGSISGI. Residues 31 to 58 lie on the Extracellular side of the membrane; it reads LGMRDFQSRFADRYNPISNSYSYSAWRQ. Residues 59 to 79 form a helical membrane-spanning segment; that stretch reads ALLTGTINAGCLFGAMLSSPF. The Cytoplasmic portion of the chain corresponds to 80–87; that stretch reads TERIGKKY. Residues 88–108 traverse the membrane as a helical segment; it reads SICFFSGVYIIAELLLVTAVP. The Extracellular portion of the chain corresponds to 109–112; the sequence is SWIQ. Residues 113–133 form a helical membrane-spanning segment; sequence VLVGKILAGVGIGALSVLSPG. At 134–144 the chain is on the cytoplasmic side; it reads YQSEVAPPQIR. The chain crosses the membrane as a helical span at residues 145 to 165; the sequence is GAVVATYQIFSTGAALVAACI. Over 166 to 179 the chain is Extracellular; sequence NMGTHKLRKTASWR. The helical transmembrane segment at 180-200 threads the bilayer; sequence TSFGINMLWGILLMVGVLFLP. Residues 201-266 lie on the Cytoplasmic side of the membrane; it reads ESPRYLIYKG…IFGKDIRYRT (66 aa). The helical transmembrane segment at 267-285 threads the bilayer; it reads CLGFLVMLFRELIGNNYYF. Residues 286-301 lie on the Extracellular side of the membrane; it reads YYATQVFKGTGMTDIF. Residues 302-322 traverse the membrane as a helical segment; that stretch reads LPAVILGAINFGTTFGALYTI. Topologically, residues 323-328 are cytoplasmic; sequence DNLGRR. The helical transmembrane segment at 329 to 349 threads the bilayer; the sequence is NPLIFGAAFQSICFFIYAAVG. At 350–363 the chain is on the extracellular side; that stretch reads DRKLIYKNGTSDHR. A glycan (N-linked (GlcNAc...) asparagine) is linked at Asn-357. A helical membrane pass occupies residues 364 to 384; sequence AGSVMIVFSCLFLFSYCCSWG. Residues 385–404 are Cytoplasmic-facing; it reads PMGWVIVGETFPIRYRSKCA. A helical membrane pass occupies residues 405 to 425; that stretch reads SVATSGNWLGNFMISFFTPFI. The Extracellular portion of the chain corresponds to 426-432; it reads NNAIGFK. A helical membrane pass occupies residues 433 to 453; that stretch reads LGYIYACINLFSSFMIFFLAK. Topologically, residues 454-555 are cytoplasmic; it reads ETKGLTLEEV…FSEDSHPTYI (102 aa). Basic and acidic residues predominate over residues 492-509; that stretch reads KEEEKREREKSKGIRGQE. Residues 492–555 are disordered; sequence KEEEKREREK…FSEDSHPTYI (64 aa). Positions 510–521 are enriched in acidic residues; the sequence is EEFIENADEDNN. Residues 522-534 are compositionally biased toward low complexity; the sequence is DSSSSSGSVVSAV. Residues 545–555 show a composition bias toward basic and acidic residues; it reads RFSEDSHPTYI.

Belongs to the major facilitator superfamily. Sugar transporter (TC 2.A.1.1) family.

The protein resides in the membrane. In terms of biological role, high-affinity gluconate transporter. This chain is High-affinity gluconate transporter ght3 (ght3), found in Schizosaccharomyces pombe (strain 972 / ATCC 24843) (Fission yeast).